A 533-amino-acid polypeptide reads, in one-letter code: Na(+)/H(+) antiporter NhaB (533 aa).

Helical transmembrane passes span 10–30, 67–87, 96–116, 131–165, 209–229, 247–267, 310–330, 355–375, 396–416, 454–474, and 485–505; these read IGNFLGNSPKWYKIAILSFLI, PGGLLAIEAVAIGMTSASQVL, VLLLLVFMVAGIYFMKQLLLF, VSLLFCLASAFLSAFLDALTVIAVIITVAVGFYSI, LLMHAGVGTALGGVCTMVGEP, IRMSPVTVPVFIAGILTCYIV, AFIGVWLIAGLALHLASVGLI, EEALPFTALLAVFFSVVAVII, LVIFYIANGLLSMVSDNVFVG, ATPNGQAAFLFLLTSALAPLI, and ALPYTIVLSIVGVMAIQIGFL.

The protein belongs to the NhaB Na(+)/H(+) (TC 2.A.34) antiporter family.

It localises to the cell inner membrane. It catalyses the reaction 2 Na(+)(in) + 3 H(+)(out) = 2 Na(+)(out) + 3 H(+)(in). Functionally, na(+)/H(+) antiporter that extrudes sodium in exchange for external protons. The sequence is that of Na(+)/H(+) antiporter NhaB from Shewanella oneidensis (strain ATCC 700550 / JCM 31522 / CIP 106686 / LMG 19005 / NCIMB 14063 / MR-1).